The following is a 594-amino-acid chain: Alanine--tRNA ligase (594 aa).

Residues His-456, His-460, Cys-558, and His-562 each contribute to the Zn(2+) site.

It belongs to the class-II aminoacyl-tRNA synthetase family. Requires Zn(2+) as cofactor.

It localises to the cytoplasm. It carries out the reaction tRNA(Ala) + L-alanine + ATP = L-alanyl-tRNA(Ala) + AMP + diphosphate. Catalyzes the attachment of alanine to tRNA(Ala) in a two-step reaction: alanine is first activated by ATP to form Ala-AMP and then transferred to the acceptor end of tRNA(Ala). Also edits incorrectly charged Ser-tRNA(Ala) and Gly-tRNA(Ala) via its editing domain. In Borreliella burgdorferi (strain ATCC 35210 / DSM 4680 / CIP 102532 / B31) (Borrelia burgdorferi), this protein is Alanine--tRNA ligase (alaS).